A 277-amino-acid chain; its full sequence is F420-dependent methylenetetrahydromethanopterin dehydrogenase (277 aa).

It belongs to the MTD family.

It carries out the reaction 5,10-methylenetetrahydromethanopterin + oxidized coenzyme F420-(gamma-L-Glu)(n) + 2 H(+) = 5,10-methenyl-5,6,7,8-tetrahydromethanopterin + reduced coenzyme F420-(gamma-L-Glu)(n). It functions in the pathway one-carbon metabolism; methanogenesis from CO(2); 5,10-methylene-5,6,7,8-tetrahydromethanopterin from 5,10-methenyl-5,6,7,8-tetrahydromethanopterin (coenzyme F420 route): step 1/1. Catalyzes the reversible reduction of methenyl-H(4)MPT(+) to methylene-H(4)MPT. This Methanococcus maripaludis (strain C5 / ATCC BAA-1333) protein is F420-dependent methylenetetrahydromethanopterin dehydrogenase.